The primary structure comprises 321 residues: Lipoyl synthase (321 aa).

A disordered region spans residues 1-21 (MRHRWEDRPVAPPPDGRPTEY). Residues Cys-63, Cys-68, Cys-74, Cys-89, Cys-93, Cys-96, and Ser-302 each contribute to the [4Fe-4S] cluster site. In terms of domain architecture, Radical SAM core spans 75-291 (WNNRTATFMI…KKLGLEMGFS (217 aa)). The tract at residues 301–321 (SSYHAHEQTEDARRGALGARG) is disordered. Positions 304 to 314 (HAHEQTEDARR) are enriched in basic and acidic residues.

This sequence belongs to the radical SAM superfamily. Lipoyl synthase family. The cofactor is [4Fe-4S] cluster.

It localises to the cytoplasm. It catalyses the reaction [[Fe-S] cluster scaffold protein carrying a second [4Fe-4S](2+) cluster] + N(6)-octanoyl-L-lysyl-[protein] + 2 oxidized [2Fe-2S]-[ferredoxin] + 2 S-adenosyl-L-methionine + 4 H(+) = [[Fe-S] cluster scaffold protein] + N(6)-[(R)-dihydrolipoyl]-L-lysyl-[protein] + 4 Fe(3+) + 2 hydrogen sulfide + 2 5'-deoxyadenosine + 2 L-methionine + 2 reduced [2Fe-2S]-[ferredoxin]. Its pathway is protein modification; protein lipoylation via endogenous pathway; protein N(6)-(lipoyl)lysine from octanoyl-[acyl-carrier-protein]: step 2/2. Its function is as follows. Catalyzes the radical-mediated insertion of two sulfur atoms into the C-6 and C-8 positions of the octanoyl moiety bound to the lipoyl domains of lipoate-dependent enzymes, thereby converting the octanoylated domains into lipoylated derivatives. The polypeptide is Lipoyl synthase (Rubrobacter xylanophilus (strain DSM 9941 / JCM 11954 / NBRC 16129 / PRD-1)).